The primary structure comprises 181 residues: MNINKSNLIWLDLEMTGLEPETDKILEIATVVTDADLNILAEGPTIAIHQSNELLDNMDEWCTTQHGKSGLTARCKASTYDEAYAVEQTIAFLKQWVPAGASPMCGNSIGQDRRFMNKYMRELEDFFHYRNLDVSTIKELARRWKPEVLAQVNKKGSHLALDDIKDSIMELKVYREKFFNL.

An Exonuclease domain is found at 8–171; that stretch reads LIWLDLEMTG…DDIKDSIMEL (164 aa). Residue Tyr-129 is part of the active site.

It belongs to the oligoribonuclease family.

It localises to the cytoplasm. Functionally, 3'-to-5' exoribonuclease specific for small oligoribonucleotides. This is Oligoribonuclease from Pseudoalteromonas translucida (strain TAC 125).